A 186-amino-acid polypeptide reads, in one-letter code: MKLIVGLGNPGREYELTRHNIGFMAIDELAKRWNISLNEQKFKGMFGAGFVNGEKVILLKPLTYMNLSGESIRPLMDYYKIDLEDFIIMYDDLDLPVGKLRLRMKGSAGGHNGVKSTIAHLGTQEFQRIRMGIDRPKNGMKVVDYVLGRFTAEEMVDVNHAIEKAANACEEWLNKSFLQVMNDFNN.

TRNA is bound at residue Tyr-14. The Proton acceptor role is filled by His-19. TRNA-binding residues include Tyr-64, Asn-66, and Asn-112.

The protein belongs to the PTH family. As to quaternary structure, monomer.

It is found in the cytoplasm. The catalysed reaction is an N-acyl-L-alpha-aminoacyl-tRNA + H2O = an N-acyl-L-amino acid + a tRNA + H(+). Functionally, hydrolyzes ribosome-free peptidyl-tRNAs (with 1 or more amino acids incorporated), which drop off the ribosome during protein synthesis, or as a result of ribosome stalling. Its function is as follows. Catalyzes the release of premature peptidyl moieties from peptidyl-tRNA molecules trapped in stalled 50S ribosomal subunits, and thus maintains levels of free tRNAs and 50S ribosomes. In Bacillus cytotoxicus (strain DSM 22905 / CIP 110041 / 391-98 / NVH 391-98), this protein is Peptidyl-tRNA hydrolase.